The sequence spans 271 residues: Solute carrier family 66 member 2 (271 aa).

3 consecutive transmembrane segments (helical) span residues 8-28, 49-69, and 76-96; these read WLLVPLHQLVSWGAAAAMVFG, FSTYVCLVLLVANILRILFWF, and PLLWQSAIMILTMLLMLKLCT. A PQ-loop 1 domain is found at 14 to 80; that stretch reads HQLVSWGAAA…RRFESPLLWQ (67 aa). Phosphoserine is present on serine 110. A run of 3 helical transmembrane segments spans residues 145–165, 168–188, and 232–252; these read DYVQCVLAFTGVAGYITYLSI, ALFVETLGFLAVLTEAMLGVP, and VCGLLQVLVDLAILGQAYAFA. Residues 178–233 form the PQ-loop 2 domain; sequence AVLTEAMLGVPQLYRNHRHQSTEGMSIKMVLMWTSGDAFKTAYFLLKGAPLQFSVC.

Its subcellular location is the membrane. The protein is Solute carrier family 66 member 2 of Homo sapiens (Human).